Consider the following 30-residue polypeptide: uncharacterized protein (30 aa).

This is an uncharacterized protein from Bacillus subtilis (strain 168).